The sequence spans 200 residues: FMN-dependent NADH:quinone oxidoreductase (200 aa).

FMN is bound by residues serine 10, methionine 96–phenylalanine 99, and serine 140–glycine 143.

This sequence belongs to the azoreductase type 1 family. In terms of assembly, homodimer. FMN serves as cofactor.

It catalyses the reaction 2 a quinone + NADH + H(+) = 2 a 1,4-benzosemiquinone + NAD(+). The enzyme catalyses N,N-dimethyl-1,4-phenylenediamine + anthranilate + 2 NAD(+) = 2-(4-dimethylaminophenyl)diazenylbenzoate + 2 NADH + 2 H(+). Quinone reductase that provides resistance to thiol-specific stress caused by electrophilic quinones. Its function is as follows. Also exhibits azoreductase activity. Catalyzes the reductive cleavage of the azo bond in aromatic azo compounds to the corresponding amines. This chain is FMN-dependent NADH:quinone oxidoreductase, found in Photorhabdus laumondii subsp. laumondii (strain DSM 15139 / CIP 105565 / TT01) (Photorhabdus luminescens subsp. laumondii).